The following is a 210-amino-acid chain: Cytochrome c biogenesis ATP-binding export protein CcmA (210 aa).

In terms of domain architecture, ABC transporter spans 4 to 207 (LAVRDLAVAR…RQSRPAGFNE (204 aa)). 36 to 43 (GPNGIGKT) contacts ATP.

The protein belongs to the ABC transporter superfamily. CcmA exporter (TC 3.A.1.107) family. In terms of assembly, the complex is composed of two ATP-binding proteins (CcmA) and two transmembrane proteins (CcmB).

It is found in the cell inner membrane. The catalysed reaction is heme b(in) + ATP + H2O = heme b(out) + ADP + phosphate + H(+). In terms of biological role, part of the ABC transporter complex CcmAB involved in the biogenesis of c-type cytochromes; once thought to export heme, this seems not to be the case, but its exact role is uncertain. Responsible for energy coupling to the transport system. The protein is Cytochrome c biogenesis ATP-binding export protein CcmA of Paracoccus denitrificans (strain Pd 1222).